Reading from the N-terminus, the 73-residue chain is Putative sulfur carrier protein AF_0556 (73 aa).

Catalysis depends on cysteine 11, which acts as the Cysteine persulfide intermediate.

The protein belongs to the sulfur carrier protein TusA family.

The sequence is that of Putative sulfur carrier protein AF_0556 from Archaeoglobus fulgidus (strain ATCC 49558 / DSM 4304 / JCM 9628 / NBRC 100126 / VC-16).